The primary structure comprises 317 residues: Probable methyltransferase tdiE (317 aa).

The protein belongs to the methyltransferase superfamily. LaeA methyltransferase family.

It participates in secondary metabolite biosynthesis. Probable methyltransferase; part of the gene cluster that mediates the biosynthesis of terrequinone A, an antitumor agent. The first step in the biosynthetic pathway for terrequinone A is formation of indole pyruvic acid (IPA) from L-tryptophan by the aminotransferase tdiD. The nonribosomal peptide synthase tdiA then immediately converts unstable IPA to didemethylasterriquinone D (DDAQ D), via condensation of 2 IPA molecules. The symmetric connectivity of the 2 IPA molecules is thought to arise by head-to-tail dual Claisen condensations facilitated by the TE domain. TdiB then catalyzes reverse prenylation by transferring dimethylallyl diphosphate to carbon atom 2' of DDAQ D, to yield asterriquinone C-1. Finally, tdiC and tdiE enzymes robustly convert asterriquinone C-1 to terrequinone A via a transformation involving regular prenylation at carbon atom 5, which requires elimination of the hydroxy group on C-5. The polypeptide is Probable methyltransferase tdiE (Emericella nidulans (strain FGSC A4 / ATCC 38163 / CBS 112.46 / NRRL 194 / M139) (Aspergillus nidulans)).